We begin with the raw amino-acid sequence, 470 residues long: Ribulose bisphosphate carboxylase large chain (470 aa).

Substrate contacts are provided by N115 and T165. Residue K167 is the Proton acceptor of the active site. Position 169 (K169) interacts with substrate. Residues K193, D195, and E196 each contribute to the Mg(2+) site. K193 bears the N6-carboxylysine mark. H286 functions as the Proton acceptor in the catalytic mechanism. Substrate contacts are provided by R287, H319, and S371.

The protein belongs to the RuBisCO large chain family. Type I subfamily. Heterohexadecamer of 8 large chains and 8 small chains. Mg(2+) is required as a cofactor.

Its subcellular location is the carboxysome. It carries out the reaction 2 (2R)-3-phosphoglycerate + 2 H(+) = D-ribulose 1,5-bisphosphate + CO2 + H2O. The catalysed reaction is D-ribulose 1,5-bisphosphate + O2 = 2-phosphoglycolate + (2R)-3-phosphoglycerate + 2 H(+). RuBisCO catalyzes two reactions: the carboxylation of D-ribulose 1,5-bisphosphate, the primary event in carbon dioxide fixation, as well as the oxidative fragmentation of the pentose substrate in the photorespiration process. Both reactions occur simultaneously and in competition at the same active site. The polypeptide is Ribulose bisphosphate carboxylase large chain (Synechococcus sp. (strain CC9902)).